The primary structure comprises 160 residues: Competence protein ComGD (160 aa).

Residues 30–50 form a helical membrane-spanning segment; that stretch reads AFTMLESLLVLGLVSILALGL.

In terms of assembly, the transformation pili are flexible filaments, consisting mainly of the major pilin ComGC and smaller amounts of the minor pilins, including at least ComGD, ComGF and ComGG, and perhaps ComGE. Interacts with ComGE. Interacts with ComGF. Interacts with ComGG.

The protein resides in the cell membrane. It localises to the cell surface. Its subcellular location is the fimbrium. Functionally, required for formation of the type IV-like pilus (T4P) that plays a role in transformation. Transformation pili are dynamically extended and retracted, perhaps thereby promoting DNA uptake and transformation. Involved in transformation. Required for DNA binding. The sequence is that of Competence protein ComGD from Streptococcus pneumoniae (strain ATCC BAA-255 / R6).